The chain runs to 463 residues: Adenosylhomocysteinase (463 aa).

3 residues coordinate substrate: Thr-54, Asp-128, and Glu-189. NAD(+) is bound at residue 190–192 (TTT). Residues Lys-219 and Asp-223 each coordinate substrate. NAD(+) is bound by residues Asn-224, 253–258 (GYGDVG), Glu-276, Asn-311, 332–334 (IGH), and Asn-377.

The protein belongs to the adenosylhomocysteinase family. Requires NAD(+) as cofactor.

The protein resides in the cytoplasm. The catalysed reaction is S-adenosyl-L-homocysteine + H2O = L-homocysteine + adenosine. Its pathway is amino-acid biosynthesis; L-homocysteine biosynthesis; L-homocysteine from S-adenosyl-L-homocysteine: step 1/1. Its function is as follows. May play a key role in the regulation of the intracellular concentration of adenosylhomocysteine. The polypeptide is Adenosylhomocysteinase (Cereibacter sphaeroides (Rhodobacter sphaeroides)).